The sequence spans 764 residues: Reticulon-1 (764 aa).

Disordered stretches follow at residues 1–37 (MAAN…GGAL), 115–147 (PDIK…SGIE), 247–400 (LYNS…SEIE), and 455–475 (ESCD…DSPM). The segment covering 261–282 (VTISFTGMETTLQTEYPENQQG) has biased composition (polar residues). Over residues 328–337 (EEQRKYKISE) the composition is skewed to basic and acidic residues. In terms of domain architecture, Reticulon spans 578-764 (AIELLYWRDI…AKIPGTKQKE (187 aa)). 2 helical membrane-spanning segments follow: residues 607–627 (FSVV…TISF) and 696–716 (VLMW…LLIM).

The protein resides in the endoplasmic reticulum membrane. It localises to the nucleus. Its function is as follows. Inhibits amyloid precursor protein processing, probably by blocking BACE1 activity. The protein is Reticulon-1 of Xenopus tropicalis (Western clawed frog).